A 1400-amino-acid polypeptide reads, in one-letter code: DNA-directed RNA polymerase subunit beta (1400 aa).

Belongs to the RNA polymerase beta chain family. As to quaternary structure, the RNAP catalytic core consists of 2 alpha, 1 beta, 1 beta' and 1 omega subunit. When a sigma factor is associated with the core the holoenzyme is formed, which can initiate transcription.

It carries out the reaction RNA(n) + a ribonucleoside 5'-triphosphate = RNA(n+1) + diphosphate. Functionally, DNA-dependent RNA polymerase catalyzes the transcription of DNA into RNA using the four ribonucleoside triphosphates as substrates. The chain is DNA-directed RNA polymerase subunit beta from Acidiphilium cryptum (strain JF-5).